The sequence spans 351 residues: NAD-dependent protein deacetylase SIR2rp1 (351 aa).

The Deacetylase sirtuin-type domain occupies 10-325 (HVVGEPTFEG…RSFAQALGFG (316 aa)). Residues 37–57 (GAGI…TGLY) and 122–125 (QNID) each bind NAD(+). His142 functions as the Proton acceptor in the catalytic mechanism. Residues Cys150, Cys153, Cys174, and Cys177 each coordinate Zn(2+). NAD(+)-binding positions include 213 to 215 (GTS) and 238 to 240 (NLE). Positions 260 to 284 (SSYRLSTGNGNGSKISSGDSSNSSS) are disordered. Over residues 265–284 (STGNGNGSKISSGDSSNSSS) the composition is skewed to low complexity. Cys311 provides a ligand contact to NAD(+).

It belongs to the sirtuin family. Class I subfamily. Zn(2+) is required as a cofactor.

The protein resides in the nucleus. It localises to the chromosome. Its subcellular location is the telomere. It catalyses the reaction N(6)-acetyl-L-lysyl-[protein] + NAD(+) + H2O = 2''-O-acetyl-ADP-D-ribose + nicotinamide + L-lysyl-[protein]. NAD-dependent protein deacetylase, which is involved in repression of RNA polymerase I-mediated expression immediately adjacent to telomeres. It is however not involved in antigenic variation and subtelomeric variant surface glycoprotein (VSG) gene silencing. Plays a role in DNA damage response. Also has ADP-ribosylation activity in vitro. The protein is NAD-dependent protein deacetylase SIR2rp1 (SIR2rp1) of Trypanosoma brucei brucei (strain 927/4 GUTat10.1).